We begin with the raw amino-acid sequence, 236 residues long: Adenosine 5'-phosphosulfate reductase (236 aa).

[4Fe-4S] cluster contacts are provided by Cys122, Cys123, Cys205, and Cys208. The active-site Nucleophile; cysteine thiosulfonate intermediate is Cys231.

It belongs to the PAPS reductase family. CysH subfamily. It depends on [4Fe-4S] cluster as a cofactor.

It localises to the cytoplasm. It catalyses the reaction [thioredoxin]-disulfide + sulfite + AMP + 2 H(+) = adenosine 5'-phosphosulfate + [thioredoxin]-dithiol. Its pathway is sulfur metabolism; hydrogen sulfide biosynthesis; sulfite from sulfate. Catalyzes the formation of sulfite from adenosine 5'-phosphosulfate (APS) using thioredoxin as an electron donor. The protein is Adenosine 5'-phosphosulfate reductase of Mycolicibacterium smegmatis (strain ATCC 700084 / mc(2)155) (Mycobacterium smegmatis).